Consider the following 389-residue polypeptide: Transcription factor MYB97 (389 aa).

HTH myb-type domains lie at 16-68 and 69-123; these read GVVL…ANHL and RPNL…KRFQ. 2 consecutive DNA-binding regions (H-T-H motif) follow at residues 44–68 and 96–119; these read WNSV…ANHL and WARM…NTRL. Residues 131-159 are disordered; it reads PPEYSQNNHQQQMYPQQPSSPLPSQTPAS. Positions 140-159 are enriched in low complexity; it reads QQQMYPQQPSSPLPSQTPAS.

Accumulates in pollen grains and pollen tube. Mostly expressed in mature pollen grains, and, to a lower extent, in inflorescences and siliques.

The protein localises to the nucleus. Transcription activator. Binds to 5'-CAACTGTC-3' and/or 5'-TAACAAA-3' motif in target gene promoter to promote their expression. Together with MYB101 and MYB120, functions as a male factor that controls pollen tube-synergid interaction in fertilization. Required for pollen tube growth arrest and sperm cell release in the female gametophyte, probably via the regulation of pollen tube-specific gene expression. The protein is Transcription factor MYB97 of Arabidopsis thaliana (Mouse-ear cress).